Consider the following 257-residue polypeptide: tRNA (guanine-N(7)-)-methyltransferase (257 aa).

The segment at 1–42 (MTVVVSDHQNPRPPGDDAAPLGRTGNRDRPPGSFFGRRKGHR) is disordered. S-adenosyl-L-methionine-binding residues include E84, E109, D136, and D158. D158 is an active-site residue. Residues K162 and D194 each coordinate substrate.

It belongs to the class I-like SAM-binding methyltransferase superfamily. TrmB family.

It carries out the reaction guanosine(46) in tRNA + S-adenosyl-L-methionine = N(7)-methylguanosine(46) in tRNA + S-adenosyl-L-homocysteine. The protein operates within tRNA modification; N(7)-methylguanine-tRNA biosynthesis. Catalyzes the formation of N(7)-methylguanine at position 46 (m7G46) in tRNA. In Nitrobacter winogradskyi (strain ATCC 25391 / DSM 10237 / CIP 104748 / NCIMB 11846 / Nb-255), this protein is tRNA (guanine-N(7)-)-methyltransferase.